Consider the following 37-residue polypeptide: Large ribosomal subunit protein bL36c (37 aa).

This sequence belongs to the bacterial ribosomal protein bL36 family.

The protein resides in the plastid. The protein localises to the chloroplast. This Phaseolus angularis (Azuki bean) protein is Large ribosomal subunit protein bL36c.